The chain runs to 378 residues: Deoxyguanosinetriphosphate triphosphohydrolase-like protein (378 aa).

The segment at 1 to 28 (MLAPYACQPGESRGRQQPESMSTFRSPF) is disordered. Residues 15–26 (RQQPESMSTFRS) show a composition bias toward polar residues. The HD domain occupies 62-198 (RLTHSIEVAQ…AAIADDVAYS (137 aa)).

This sequence belongs to the dGTPase family. Type 2 subfamily.

The sequence is that of Deoxyguanosinetriphosphate triphosphohydrolase-like protein from Cereibacter sphaeroides (strain ATCC 17025 / ATH 2.4.3) (Rhodobacter sphaeroides).